Here is a 125-residue protein sequence, read N- to C-terminus: Small ribosomal subunit protein uS12 (125 aa).

Asp-89 carries the 3-methylthioaspartic acid modification.

The protein belongs to the universal ribosomal protein uS12 family. As to quaternary structure, part of the 30S ribosomal subunit. Contacts proteins S8 and S17. May interact with IF1 in the 30S initiation complex.

With S4 and S5 plays an important role in translational accuracy. Functionally, interacts with and stabilizes bases of the 16S rRNA that are involved in tRNA selection in the A site and with the mRNA backbone. Located at the interface of the 30S and 50S subunits, it traverses the body of the 30S subunit contacting proteins on the other side and probably holding the rRNA structure together. The combined cluster of proteins S8, S12 and S17 appears to hold together the shoulder and platform of the 30S subunit. This is Small ribosomal subunit protein uS12 from Cupriavidus necator (strain ATCC 17699 / DSM 428 / KCTC 22496 / NCIMB 10442 / H16 / Stanier 337) (Ralstonia eutropha).